Consider the following 312-residue polypeptide: tRNA pseudouridine synthase B (312 aa).

Asp49 serves as the catalytic Nucleophile.

The protein belongs to the pseudouridine synthase TruB family. Type 1 subfamily.

It catalyses the reaction uridine(55) in tRNA = pseudouridine(55) in tRNA. Functionally, responsible for synthesis of pseudouridine from uracil-55 in the psi GC loop of transfer RNAs. This is tRNA pseudouridine synthase B from Chelativorans sp. (strain BNC1).